Here is a 127-residue protein sequence, read N- to C-terminus: Small ribosomal subunit protein bS6 (127 aa).

Residues 102–127 (IMQGAEKGKSSRKEKVDAEAEASEEA) are disordered. Basic and acidic residues predominate over residues 107 to 119 (EKGKSSRKEKVDA).

Belongs to the bacterial ribosomal protein bS6 family.

Binds together with bS18 to 16S ribosomal RNA. The chain is Small ribosomal subunit protein bS6 from Coxiella burnetii (strain CbuK_Q154) (Coxiella burnetii (strain Q154)).